The sequence spans 143 residues: uncharacterized protein (143 aa).

The region spanning 24–78 is the HTH cro/C1-type domain; the sequence is IRQRRRWQNMSQAALGEAIGVTFQQVQKYEKGSNRVGAGRLQQISDALEVHPSYF. The segment at residues 35–54 is a DNA-binding region (H-T-H motif); it reads QAALGEAIGVTFQQVQKYEK.

This is an uncharacterized protein from Sinorhizobium fredii (strain NBRC 101917 / NGR234).